A 461-amino-acid chain; its full sequence is Juvenile hormone epoxide hydrolase (461 aa).

Residues 4 to 24 (LLFIALPLLVLASIPLYLLVL) traverse the membrane as a helical segment. The active-site Nucleophile is aspartate 227. The Proton donor role is filled by tyrosine 373. Residue histidine 430 is the Proton acceptor of the active site.

This sequence belongs to the peptidase S33 family. As to quaternary structure, homodimer. In terms of tissue distribution, expressed in fat body, foregut and midgut but not in brain, subesophageal ganglia or silk gland of larvae on day 1 of fifth instar.

It localises to the microsome membrane. Its subcellular location is the endoplasmic reticulum membrane. It catalyses the reaction cis-stilbene oxide + H2O = (1R,2R)-hydrobenzoin. The enzyme catalyses 1-(4-methoxyphenyl)-N-methyl-N-[(3-methyloxetan-3-yl)methyl]methanamine + H2O = 2-{[(4-methoxybenzyl)(methyl)amino]methyl}-2-methylpropane-1,3-diol. Functionally, catalyzes juvenile hormone hydrolysis. Degrades juvenile hormone III (JH III) about 3 times and 5 times slower than juvenile hormone I (JH I) and II (JH II), respectively. Degrades cis-stilbene oxide and trans-stilbene oxide about 18 and 43 times slower than JH III, respectively. This is Juvenile hormone epoxide hydrolase from Bombyx mori (Silk moth).